Here is a 676-residue protein sequence, read N- to C-terminus: Hemin receptor (676 aa).

An N-terminal signal peptide occupies residues 1–28; the sequence is MLRSTSDRFRWSSLSLAIACTLPLATQA. The TonB box motif lies at 44–51; sequence DTMVVTAT. The TBDR plug domain maps to 56–167; that stretch reads SSFEAPMMVT…LGGVIAYETV (112 aa). The region spanning 178–676 is the TBDR beta-barrel domain; the sequence is NSGYRVYSSA…NVKFFVSYQW (499 aa). Positions 659-676 match the TonB C-terminal box motif; the sequence is QGIPQDGRNVKFFVSYQW.

It belongs to the TonB-dependent receptor family.

It is found in the cell outer membrane. Functionally, this protein is involved in the initial step of iron uptake by binding hemin, an iron chelatin siderophore that allows the bacteria to extract iron from the environment. This Yersinia pestis protein is Hemin receptor (hmuR).